Reading from the N-terminus, the 552-residue chain is 5'-AMP-activated protein kinase catalytic subunit alpha-2 (552 aa).

A Protein kinase domain is found at 16 to 268; it reads YVLGDTLGVG…IKDIREHEWF (253 aa). Residues 22-30 and Lys-45 each bind ATP; that span reads LGVGTFGKV. The active-site Proton acceptor is the Asp-139. A Phosphothreonine; by LKB1 and CaMKK2 modification is found at Thr-172. At Thr-258 the chain carries Phosphothreonine. Residues 291-376 are AIS; that stretch reads EAVKEVCEKF…PERMPPLIAD (86 aa). 2 positions are modified to phosphoserine: Ser-377 and Ser-491.

Belongs to the protein kinase superfamily. CAMK Ser/Thr protein kinase family. SNF1 subfamily. AMPK is a heterotrimer of an alpha catalytic subunit (PRKAA1 or PRKAA2), a beta (PRKAB1 or PRKAB2) and a gamma non-catalytic subunits (PRKAG1, PRKAG2 or PRKAG3). Interacts with FNIP1 and FNIP2. Interacts with DUSP29. Interacts with ARF6. The phosphorylated form at Thr-172 mediated by CamKK2 interacts with ACSS2. Mg(2+) serves as cofactor. Ubiquitinated. In terms of processing, phosphorylated at Thr-172 by STK11/LKB1 in complex with STE20-related adapter-alpha (STRADA) pseudo kinase and CAB39. Also phosphorylated at Thr-172 by CAMKK2; triggered by a rise in intracellular calcium ions, without detectable changes in the AMP/ATP ratio. CAMKK1 can also phosphorylate Thr-172, but at much lower level. Dephosphorylated by protein phosphatase 2A and 2C (PP2A and PP2C). Phosphorylated by ULK1; leading to negatively regulate AMPK activity and suggesting the existence of a regulatory feedback loop between ULK1 and AMPK. Dephosphorylated by PPM1A and PPM1B at Thr-172 (mediated by STK11/LKB1).

It is found in the cytoplasm. Its subcellular location is the nucleus. The enzyme catalyses L-seryl-[protein] + ATP = O-phospho-L-seryl-[protein] + ADP + H(+). It carries out the reaction L-threonyl-[protein] + ATP = O-phospho-L-threonyl-[protein] + ADP + H(+). It catalyses the reaction L-seryl-[acetyl-CoA carboxylase] + ATP = O-phospho-L-seryl-[acetyl-CoA carboxylase] + ADP + H(+). The catalysed reaction is L-seryl-[3-hydroxy-3-methylglutaryl-coenzyme A reductase] + ATP = O-phospho-L-seryl-[3-hydroxy-3-methylglutaryl-coenzyme A reductase] + ADP + H(+). Its activity is regulated as follows. Activated by phosphorylation on Thr-172. Binding of AMP to non-catalytic gamma subunit (PRKAG1, PRKAG2 or PRKAG3) results in allosteric activation, inducing phosphorylation on Thr-172. AMP-binding to gamma subunit also sustains activity by preventing dephosphorylation of Thr-172. ADP also stimulates Thr-172 phosphorylation, without stimulating already phosphorylated AMPK. ATP promotes dephosphorylation of Thr-172, rendering the enzyme inactive. Under physiological conditions AMPK mainly exists in its inactive form in complex with ATP, which is much more abundant than AMP. Selectively inhibited by compound C (6-[4-(2-Piperidin-1-yl-ethoxy)-phenyl)]-3-pyridin-4-yl-pyyrazolo[1,5-a] pyrimidine. Activated by resveratrol, a natural polyphenol present in red wine, and S17834, a synthetic polyphenol. Salicylate/aspirin directly activates kinase activity, primarily by inhibiting Thr-172 dephosphorylation. Catalytic subunit of AMP-activated protein kinase (AMPK), an energy sensor protein kinase that plays a key role in regulating cellular energy metabolism. In response to reduction of intracellular ATP levels, AMPK activates energy-producing pathways and inhibits energy-consuming processes: inhibits protein, carbohydrate and lipid biosynthesis, as well as cell growth and proliferation. AMPK acts via direct phosphorylation of metabolic enzymes, and by longer-term effects via phosphorylation of transcription regulators. Regulates lipid synthesis by phosphorylating and inactivating lipid metabolic enzymes such as ACACA, ACACB, GYS1, HMGCR and LIPE; regulates fatty acid and cholesterol synthesis by phosphorylating acetyl-CoA carboxylase (ACACA and ACACB) and hormone-sensitive lipase (LIPE) enzymes, respectively. Promotes lipolysis of lipid droplets by mediating phosphorylation of isoform 1 of CHKA (CHKalpha2). Regulates insulin-signaling and glycolysis by phosphorylating IRS1, PFKFB2 and PFKFB3. Involved in insulin receptor/INSR internalization. AMPK stimulates glucose uptake in muscle by increasing the translocation of the glucose transporter SLC2A4/GLUT4 to the plasma membrane, possibly by mediating phosphorylation of TBC1D4/AS160. Regulates transcription and chromatin structure by phosphorylating transcription regulators involved in energy metabolism such as CRTC2/TORC2, FOXO3, histone H2B, HDAC5, MEF2C, MLXIPL/ChREBP, EP300, HNF4A, p53/TP53, SREBF1, SREBF2 and PPARGC1A. Acts as a key regulator of glucose homeostasis in liver by phosphorylating CRTC2/TORC2, leading to CRTC2/TORC2 sequestration in the cytoplasm. In response to stress, phosphorylates 'Ser-36' of histone H2B (H2BS36ph), leading to promote transcription. Acts as a key regulator of cell growth and proliferation by phosphorylating FNIP1, TSC2, RPTOR, WDR24 and ATG1/ULK1: in response to nutrient limitation, negatively regulates the mTORC1 complex by phosphorylating RPTOR component of the mTORC1 complex and by phosphorylating and activating TSC2. Also phosphorylates and inhibits GATOR2 subunit WDR24 in response to nutrient limitation, leading to suppress glucose-mediated mTORC1 activation. In response to energetic stress, phosphorylates FNIP1, inactivating the non-canonical mTORC1 signaling, thereby promoting nuclear translocation of TFEB and TFE3, and inducing transcription of lysosomal or autophagy genes. In response to nutrient limitation, promotes autophagy by phosphorylating and activating ATG1/ULK1. In that process, it also activates WDR45/WIPI4. Phosphorylates CASP6, thereby preventing its autoprocessing and subsequent activation. AMPK also acts as a regulator of circadian rhythm by mediating phosphorylation of CRY1, leading to destabilize it. May regulate the Wnt signaling pathway by phosphorylating CTNNB1, leading to stabilize it. Also acts as a regulator of cellular polarity by remodeling the actin cytoskeleton; probably by indirectly activating myosin. Also phosphorylates CFTR, EEF2K, KLC1, NOS3 and SLC12A1. Plays an important role in the differential regulation of pro-autophagy (composed of PIK3C3, BECN1, PIK3R4 and UVRAG or ATG14) and non-autophagy (composed of PIK3C3, BECN1 and PIK3R4) complexes, in response to glucose starvation. Can inhibit the non-autophagy complex by phosphorylating PIK3C3 and can activate the pro-autophagy complex by phosphorylating BECN1. Upon glucose starvation, promotes ARF6 activation in a kinase-independent manner leading to cell migration. Upon glucose deprivation mediates the phosphorylation of ACSS2 at 'Ser-659', which exposes the nuclear localization signal of ACSS2, required for its interaction with KPNA1 and nuclear translocation. Upon stress, regulates mitochondrial fragmentation through phosphorylation of MTFR1L. This is 5'-AMP-activated protein kinase catalytic subunit alpha-2 from Mus musculus (Mouse).